The sequence spans 371 residues: Choline kinase B1 (371 aa).

This sequence belongs to the choline/ethanolamine kinase family. Mg(2+) serves as cofactor.

It carries out the reaction choline + ATP = phosphocholine + ADP + H(+). In Caenorhabditis elegans, this protein is Choline kinase B1 (ckb-1).